The chain runs to 165 residues: SsrA-binding protein (165 aa).

The span at 135-158 (QAHDKRQDMARRDAQREVTRELGR) shows a compositional bias: basic and acidic residues. The tract at residues 135–165 (QAHDKRQDMARRDAQREVTRELGRRVKGMTN) is disordered.

It belongs to the SmpB family.

It localises to the cytoplasm. Functionally, required for rescue of stalled ribosomes mediated by trans-translation. Binds to transfer-messenger RNA (tmRNA), required for stable association of tmRNA with ribosomes. tmRNA and SmpB together mimic tRNA shape, replacing the anticodon stem-loop with SmpB. tmRNA is encoded by the ssrA gene; the 2 termini fold to resemble tRNA(Ala) and it encodes a 'tag peptide', a short internal open reading frame. During trans-translation Ala-aminoacylated tmRNA acts like a tRNA, entering the A-site of stalled ribosomes, displacing the stalled mRNA. The ribosome then switches to translate the ORF on the tmRNA; the nascent peptide is terminated with the 'tag peptide' encoded by the tmRNA and targeted for degradation. The ribosome is freed to recommence translation, which seems to be the essential function of trans-translation. The sequence is that of SsrA-binding protein from Mycolicibacterium gilvum (strain PYR-GCK) (Mycobacterium gilvum (strain PYR-GCK)).